A 107-amino-acid chain; its full sequence is MASPAPGAGFQNKNRVAILAELDKEKRRLIQNSSMNNPGASIPLSRPALNKDFRDHAEQQHIAAQQKAALQHAHAHSSGFFITQDSSFGNLILPVLPRLDPPPPAES.

The protein belongs to the SOSS-C family. As to quaternary structure, belongs to the multiprotein complex Integrator. Component of the SOSS complex, composed of soss-b (soss-b1/nabp2 or soss-b2/nabp1), soss-a/ints3 and soss-c/inip.

It localises to the nucleus. Component of the SOSS complex, a multiprotein complex that functions downstream of the MRN complex to promote DNA repair and G2/M checkpoint. The SOSS complex associates with single-stranded DNA at DNA lesions and influences diverse endpoints in the cellular DNA damage response including cell-cycle checkpoint activation, recombinational repair and maintenance of genomic stability. Required for efficient homologous recombination-dependent repair of double-strand breaks (DSBs). The sequence is that of SOSS complex subunit C (inip) from Salmo salar (Atlantic salmon).